Here is a 2149-residue protein sequence, read N- to C-terminus: Polyketide synthase 1 (2149 aa).

Residues 19–261 (FIFGDQSSCN…TRLAVHAPYH (243 aa)) form an N-terminal acylcarrier protein transacylase domain (SAT) region. Positions 394–829 (ESKIAIIGMS…GGNTALLVED (436 aa)) constitute a Ketosynthase family 3 (KS3) domain. Active-site for beta-ketoacyl synthase activity residues include cysteine 566, histidine 701, and histidine 745. The malonyl-CoA:ACP transacylase (MAT) domain stretch occupies residues 929–1233 (AFVFSGQGSQ…PSLMRNKDGW (305 aa)). Serine 1018 serves as the catalytic For acyl/malonyl transferase activity. Positions 1310–1624 (TASVHRIVHE…RKVLNTAMPP (315 aa)) are product template (PT) domain. An N-terminal hotdog fold region spans residues 1314-1447 (HRIVHESVDK…SSLHFERPKV (134 aa)). A PKS/mFAS DH domain is found at 1314-1619 (HRIVHESVDK…FQGIPRKVLN (306 aa)). Histidine 1346 acts as the Proton acceptor; for dehydratase activity in catalysis. The tract at residues 1474–1619 (LNSRMSSGVI…FQGIPRKVLN (146 aa)) is C-terminal hotdog fold. The Proton donor; for dehydratase activity role is filled by aspartate 1533. Positions 1619–1657 (NTAMPPPKSQNEAPVRSAPAKPAAKPPKSASSEHSGHFA) are disordered. Residues 1635–1650 (SAPAKPAAKPPKSASS) are compositionally biased toward low complexity. A Carrier 1 domain is found at 1678 to 1752 (RNPMLAVFKI…DLATHLGLDT (75 aa)). Serine 1712 bears the O-(pantetheine 4'-phosphoryl)serine mark. Over residues 1755 to 1790 (SDQSSGQSSSSGGLSPRSDSIGEITSSATTPPSLSP) the composition is skewed to low complexity. The interval 1755-1796 (SDQSSGQSSSSGGLSPRSDSIGEITSSATTPPSLSPRGSVSG) is disordered. Positions 1793–1870 (SVSGSQCKDV…SFKHMFQQGH (78 aa)) constitute a Carrier 2 domain. Serine 1830 carries the O-(pantetheine 4'-phosphoryl)serine modification. Residues 1882–2147 (LKQYRATSTL…ERVAAFIRST (266 aa)) are thioesterase (TE) domain. Serine 1973 serves as the catalytic For thioesterase activity.

Polyketide synthase; part of the Pks1 gene cluster that mediates the biosynthesis of an anthraquinone derivative pigment that contributes to conidial pigmentation that provides protection from UV radiation, heat and cold stress. The polyketide synthase Pks1 produces 1-acetyl-2,4,6,8-tetrahydroxy-9,10-anthraquinone though condensation of acetyl-CoA with malonyl-CoA. The dehydratase EthD and the laccase Mlac1 further convert the anthraquinone derivative into the final conidial pigment. The sequence is that of Polyketide synthase 1 from Metarhizium majus (strain ARSEF 297).